The following is a 241-amino-acid chain: Ribosomal RNA small subunit methyltransferase J (241 aa).

S-adenosyl-L-methionine is bound by residues 94 to 95 (RD) and Asp163.

This sequence belongs to the methyltransferase superfamily. RsmJ family.

It localises to the cytoplasm. It catalyses the reaction guanosine(1516) in 16S rRNA + S-adenosyl-L-methionine = N(2)-methylguanosine(1516) in 16S rRNA + S-adenosyl-L-homocysteine + H(+). Specifically methylates the guanosine in position 1516 of 16S rRNA. The sequence is that of Ribosomal RNA small subunit methyltransferase J from Francisella tularensis subsp. novicida (strain U112).